Consider the following 427-residue polypeptide: Peptidase B (427 aa).

Mn(2+)-binding residues include K195 and D200. K207 is an active-site residue. Mn(2+) contacts are provided by D218, D277, and E279. R281 is an active-site residue.

It belongs to the peptidase M17 family. In terms of assembly, homohexamer. Mn(2+) is required as a cofactor.

The protein localises to the cytoplasm. The enzyme catalyses Release of an N-terminal amino acid, Xaa, from a peptide or arylamide. Xaa is preferably Glu or Asp but may be other amino acids, including Leu, Met, His, Cys and Gln.. Its function is as follows. Probably plays an important role in intracellular peptide degradation. This is Peptidase B from Shigella boydii serotype 18 (strain CDC 3083-94 / BS512).